The primary structure comprises 312 residues: Methionyl-tRNA formyltransferase (312 aa).

Residue 112 to 115 (SLLP) coordinates (6S)-5,6,7,8-tetrahydrofolate.

Belongs to the Fmt family.

The catalysed reaction is L-methionyl-tRNA(fMet) + (6R)-10-formyltetrahydrofolate = N-formyl-L-methionyl-tRNA(fMet) + (6S)-5,6,7,8-tetrahydrofolate + H(+). In terms of biological role, attaches a formyl group to the free amino group of methionyl-tRNA(fMet). The formyl group appears to play a dual role in the initiator identity of N-formylmethionyl-tRNA by promoting its recognition by IF2 and preventing the misappropriation of this tRNA by the elongation apparatus. The protein is Methionyl-tRNA formyltransferase of Syntrophus aciditrophicus (strain SB).